Consider the following 95-residue polypeptide: Aspartyl/glutamyl-tRNA(Asn/Gln) amidotransferase subunit C (95 aa).

Belongs to the GatC family. Heterotrimer of A, B and C subunits.

It carries out the reaction L-glutamyl-tRNA(Gln) + L-glutamine + ATP + H2O = L-glutaminyl-tRNA(Gln) + L-glutamate + ADP + phosphate + H(+). The catalysed reaction is L-aspartyl-tRNA(Asn) + L-glutamine + ATP + H2O = L-asparaginyl-tRNA(Asn) + L-glutamate + ADP + phosphate + 2 H(+). Its function is as follows. Allows the formation of correctly charged Asn-tRNA(Asn) or Gln-tRNA(Gln) through the transamidation of misacylated Asp-tRNA(Asn) or Glu-tRNA(Gln) in organisms which lack either or both of asparaginyl-tRNA or glutaminyl-tRNA synthetases. The reaction takes place in the presence of glutamine and ATP through an activated phospho-Asp-tRNA(Asn) or phospho-Glu-tRNA(Gln). The sequence is that of Aspartyl/glutamyl-tRNA(Asn/Gln) amidotransferase subunit C from Beijerinckia indica subsp. indica (strain ATCC 9039 / DSM 1715 / NCIMB 8712).